The primary structure comprises 158 residues: Frataxin homolog, mitochondrial (158 aa).

This sequence belongs to the frataxin family. As to quaternary structure, monomer. Oligomer.

The protein resides in the mitochondrion. The catalysed reaction is 4 Fe(2+) + O2 + 4 H(+) = 4 Fe(3+) + 2 H2O. In terms of biological role, promotes the biosynthesis of heme as well as the assembly and repair of iron-sulfur clusters by delivering Fe(2+) to proteins involved in these pathways. May play a role in the protection against iron-catalyzed oxidative stress through its ability to catalyze the oxidation of Fe(2+) to Fe(3+). May be able to store large amounts of the metal in the form of a ferrihydrite mineral by oligomerization. The chain is Frataxin homolog, mitochondrial from Schizosaccharomyces pombe (strain 972 / ATCC 24843) (Fission yeast).